The following is a 434-amino-acid chain: MTVAISNPAAPPVSARAYLSVIGGTCALLCTVGFVVAFGVFQGYYTEHLLRGMSEFDIPWIGSASIFLLYVSAPICGVLVDRFGPKVLLIAGSIGVLVAIFMISLCSQYYQIFLAQAVLLGISMGFVTWPPFAVVSRNLPHHRGLALGVITGGSSVGGIVWSIMIEELLTKRNLGFPWTVRVLGFTMLPLLAFACISITEPPKQSQPQPRPALEATVEGGSASPTPKPEYASLPLLRSTVFISICVGFGLAFLGLFNPFFYISSYAAGHGASAQTSSYMISIMNAATLFGRVIPGIVADRVGHYNVMIFVLLASGITSFCWTEVRSLTGLVIWSIAYGFSSGAILSLQGACAGKIATPQNQGKAIGFLQGSLAVTVLVGSPIGGQLLGHYGYLSLSMFTGATLVMGAVVMGYARLCLNRSPMEAHQFRFLLAPN.

A run of 12 helical transmembrane segments spans residues 21–41 (VIGG…FGVF), 60–80 (WIGS…GVLV), 87–107 (VLLI…SLCS), 112–132 (IFLA…WPPF), 145–165 (LALG…SIMI), 182–202 (VLGF…TEPP), 240–260 (VFIS…NPFF), 278–298 (YMIS…GIVA), 301–321 (VGHY…SFCW), 327–347 (LTGL…ILSL), 364–384 (AIGF…PIGG), and 393–413 (LSLS…MGYA). The disordered stretch occupies residues 201-225 (PPKQSQPQPRPALEATVEGGSASPT).

The protein belongs to the major facilitator superfamily. Monocarboxylate porter (TC 2.A.1.13) family.

It localises to the cell membrane. MFS-type transporter; part of the gene cluster that mediates the biosynthesis of fumigermin that inhibits germination of spores of the inducing S.rapamycinicus, and thus helps the fungus to defend resources in the shared habitat against a bacterial competitor. May be involved in the secretion of fumigermin. In Aspergillus fumigatus (strain ATCC MYA-4609 / CBS 101355 / FGSC A1100 / Af293) (Neosartorya fumigata), this protein is MFS-type transporter AFUA_1G00970.